The primary structure comprises 365 residues: tRNA/tmRNA (uracil-C(5))-methyltransferase (365 aa).

S-adenosyl-L-methionine is bound by residues Gln-189, Tyr-217, Asn-222, Glu-238, and Asp-298. Catalysis depends on Cys-323, which acts as the Nucleophile. Catalysis depends on Glu-357, which acts as the Proton acceptor.

The protein belongs to the class I-like SAM-binding methyltransferase superfamily. RNA M5U methyltransferase family. TrmA subfamily.

It catalyses the reaction uridine(54) in tRNA + S-adenosyl-L-methionine = 5-methyluridine(54) in tRNA + S-adenosyl-L-homocysteine + H(+). The catalysed reaction is uridine(341) in tmRNA + S-adenosyl-L-methionine = 5-methyluridine(341) in tmRNA + S-adenosyl-L-homocysteine + H(+). Dual-specificity methyltransferase that catalyzes the formation of 5-methyluridine at position 54 (m5U54) in all tRNAs, and that of position 341 (m5U341) in tmRNA (transfer-mRNA). The polypeptide is tRNA/tmRNA (uracil-C(5))-methyltransferase (Shewanella halifaxensis (strain HAW-EB4)).